The following is a 338-amino-acid chain: Phenylalanine--tRNA ligase alpha subunit (338 aa).

Glutamate 253 lines the Mg(2+) pocket.

It belongs to the class-II aminoacyl-tRNA synthetase family. Phe-tRNA synthetase alpha subunit type 1 subfamily. As to quaternary structure, tetramer of two alpha and two beta subunits. Mg(2+) is required as a cofactor.

The protein resides in the cytoplasm. The enzyme catalyses tRNA(Phe) + L-phenylalanine + ATP = L-phenylalanyl-tRNA(Phe) + AMP + diphosphate + H(+). The protein is Phenylalanine--tRNA ligase alpha subunit of Geobacter metallireducens (strain ATCC 53774 / DSM 7210 / GS-15).